Here is a 493-residue protein sequence, read N- to C-terminus: Ketol-acid reductoisomerase (NADP(+)) (493 aa).

In terms of domain architecture, KARI N-terminal Rossmann spans 15–208 (AQLGKCRFMQ…GGDRAGVLES (194 aa)). NADP(+) is bound by residues 45 to 48 (CGAQ), Arg-68, Arg-76, Ser-78, and 108 to 110 (DKQ). His-132 is an active-site residue. Gly-158 contributes to the NADP(+) binding site. 2 KARI C-terminal knotted domains span residues 209–344 (SFVA…NALA) and 345–486 (FAGK…MKDM). Mg(2+) is bound by residues Asp-217, Glu-221, Glu-389, and Glu-393. Residue Ser-414 coordinates substrate.

The protein belongs to the ketol-acid reductoisomerase family. Mg(2+) serves as cofactor.

It catalyses the reaction (2R)-2,3-dihydroxy-3-methylbutanoate + NADP(+) = (2S)-2-acetolactate + NADPH + H(+). The enzyme catalyses (2R,3R)-2,3-dihydroxy-3-methylpentanoate + NADP(+) = (S)-2-ethyl-2-hydroxy-3-oxobutanoate + NADPH + H(+). The protein operates within amino-acid biosynthesis; L-isoleucine biosynthesis; L-isoleucine from 2-oxobutanoate: step 2/4. It functions in the pathway amino-acid biosynthesis; L-valine biosynthesis; L-valine from pyruvate: step 2/4. Involved in the biosynthesis of branched-chain amino acids (BCAA). Catalyzes an alkyl-migration followed by a ketol-acid reduction of (S)-2-acetolactate (S2AL) to yield (R)-2,3-dihydroxy-isovalerate. In the isomerase reaction, S2AL is rearranged via a Mg-dependent methyl migration to produce 3-hydroxy-3-methyl-2-ketobutyrate (HMKB). In the reductase reaction, this 2-ketoacid undergoes a metal-dependent reduction by NADPH to yield (R)-2,3-dihydroxy-isovalerate. This is Ketol-acid reductoisomerase (NADP(+)) from Aeromonas salmonicida (strain A449).